Here is a 2036-residue protein sequence, read N- to C-terminus: Transmembrane channel-like protein (2036 aa).

2 disordered regions span residues 1–178 (MQND…IDDE) and 194–243 (SVRG…ESTQ). The Cytoplasmic portion of the chain corresponds to 1–353 (MQNDEEPAAA…GVASYFTFLR (353 aa)). The span at 58–73 (VGSSSSNGNTSNVATG) shows a compositional bias: low complexity. The segment covering 74–90 (ANSENNSGVTSPHQLSV) has biased composition (polar residues). Residues 125–134 (ASQEDHRSYE) show a composition bias toward basic and acidic residues. The span at 166–178 (FDEDGGGGDIDDE) shows a compositional bias: acidic residues. The segment covering 198 to 208 (YRGKRGSRSSR) has biased composition (basic residues). Positions 216–225 (HVLDSVERRR) are enriched in basic and acidic residues. Over residues 227 to 243 (SVYTTSSEEGTNQESTQ) the composition is skewed to polar residues. A helical membrane pass occupies residues 354–374 (WLMWVNIMIAIPLVAFVIGPE). The Extracellular portion of the chain corresponds to 375–395 (YFATKHGETDPRKRMSDPEAR). Residues 396 to 418 (VAGNLFTFWEFEGYLKYSPMFYG) traverse the membrane as a helical segment. At 419-432 (YYSSTSGISTSGYK) the chain is on the cytoplasmic side. A helical transmembrane segment spans residues 433–453 (LPLAYFLTAVLVYIYSFVATL). Residues 454 to 526 (RKMAENSRNS…NRNWRVILQR (73 aa)) lie on the Extracellular side of the membrane. Residues 527–547 (ILVNILVMGLLGLSGATVVLL) traverse the membrane as a helical segment. Over 548–567 (VNHSEDLAKHDNWLSRNAVN) the chain is Cytoplasmic. A helical transmembrane segment spans residues 568-588 (VTMTLLSFFLPMIFEALGLFE). The Extracellular portion of the chain corresponds to 589-599 (NWHPRQQLRLQ). A helical transmembrane segment spans residues 600–620 (LARIMILNMLNLYSLMFSFIY). Over 621-1308 (KINSKEKPLQ…ILTLINNQGQ (688 aa)) the chain is Cytoplasmic. 5 disordered regions span residues 789–839 (TTAT…TEAT), 860–967 (KPLG…TDQA), 996–1027 (FFTSKYSRRHRNESAVSAGQPRETTESVNATP), 1066–1143 (LRGR…EGSE), and 1186–1205 (GSTTESPDSTTQSSDSKQLT). Residues 870-885 (IPNSTTNSATLSTIPA) show a composition bias toward polar residues. Residues 886 to 906 (TLNTTNLPLNSTTKLTTTTST) show a composition bias toward low complexity. The span at 933 to 952 (TSDAPDNNSYSDITDYSSEP) shows a compositional bias: polar residues. The span at 953-967 (SEIEDFDEQESTDQA) shows a compositional bias: acidic residues. 3 stretches are compositionally biased toward low complexity: residues 1069–1083 (RITTTTSTSTTSTTT), 1091–1100 (RTTTTELTST), and 1107–1130 (TTESSTDSSSPGSTTNAFDSSSST). A helical transmembrane segment spans residues 1309 to 1329 (VWMGIFFSPGLVLINLVKLMI). Topologically, residues 1330–1358 (MMYFRSWIVLTCNVPHEVVFKASKSNNFY) are extracellular. A helical transmembrane segment spans residues 1359-1379 (LSLLLTMLFLCVLPVGYAIVW). Over 1380-1423 (LRPSWHCGPFSEYNRIAEFITNTTRNALPKQLHEPLDYLTSSST) the chain is Cytoplasmic. Residues 1424–1444 (VIPLLLLLILIIYYLVSLTGA) traverse the membrane as a helical segment. Residues 1445–2036 (LREANQDLRT…RIDIENEHEK (592 aa)) lie on the Extracellular side of the membrane. Disordered regions lie at residues 1527-1572 (LRKG…SRLQ), 1592-1841 (ERAR…SRQG), and 1859-1990 (KKDD…IPTI). 5 stretches are compositionally biased toward basic and acidic residues: residues 1538 to 1566 (SFVRRDDDDTDTEHQDSLPHDEEAKDKRF), 1614 to 1640 (KETHPKSRFKVEKHERKDRGSMKDKKD), 1658 to 1668 (SPKDNEHDPDT), 1727 to 1743 (HIVDEKKPPPHEVEDKP), and 1777 to 1793 (PEPEVFKFDERSVERSS). Residues 1806-1838 (NEPSGTEEQDRSLPSPTPSQGQGHHQRQLSVLS) are compositionally biased toward polar residues. Residues 1890-1899 (VLSSVSSSTA) are compositionally biased toward low complexity. The span at 1903–1914 (PPTPEPESPTPS) shows a compositional bias: pro residues. Positions 1976-1990 (QDSQSSIWSDNIPTI) are enriched in polar residues.

This sequence belongs to the TMC family. Expressed in multi-dendritic neurons of the labellum (md-L), which extend elaborate dendritic arbors innervating the bases of taste hairs (at protein level). In larvae, expressed in class I and class II dendritic arborization (da) neurons and bipolar dendrite (bd) neurons (at protein level). In adults, expressed in various sensory neurons including those in the mouth parts, olfactory neurons in the antenna, wing bristle neurons, haltere neurons, arista neurons, and many other sensory neurons, including a subset of chordotonal (Cho) neurons. Expressed in md-L axon terminals, including those that project into the subesophageal zone (SEZ). Also expressed in a small number of local neurons in the adult ventral nerve cord (VNC), and projections extending from a few neurons in the legs or wing hinges. In the adult mouth, expressed in a few multi-dendritic neurons of the ventral cibarial sensory organ (VCSO); the multiple elaborate dendritic branches form a brush-like structure that faces the luminal side of the food-passing tunnel. Also expressed in the oviduct and uterus of adult females.

The protein resides in the cell membrane. It is found in the cell projection. It localises to the dendrite. In terms of biological role, probable ion channel. Component of mechanosensitive neurons that participates in proprioception, sensing food texture, and directing egg-laying site selection (oviposition). Component of multi-dendritic neurons of the labellum (md-L) where it is required for sensing the hardness and viscosity of their food, enabling them to behaviorally discriminate their preferred softness and smoothness from harder and stickier food options. Required as part of oviposition site selection process to relay mechanosensory and chemosensory information on the hardness and sweetness of potential egg-laying substrates, thus ensuring females select the most optimal site for their eggs survival. Females determine the softest substrate for their eggs first by making a coarse evaluation of substrate hardness using mechanosensitive channels nan and Piezo in the leg tarsal bristles, followed by a much finer assessment using nan, iav and Tmc mechanosensitive channels on the labellum. This protein is required to sense subtle differences in substrate stiffness (between 0.25% and 0.3% agarose), likely acting in the md-L neurons. Also required in neurons on the labellum, including the md-Ls, and possibly in the brain, to inhibit discrimination of egg-laying substrates of different hardness if the substrate contains sucrose. During oviposition evaluation, activation of sweet neurons by sucrose enhances the activity of the Tmc neurons resulting in females losing their softness preference in favor of egg-laying sites that contain sucrose. Acts in the larvae peripheral sensory neurons, to contribute to proprioception and sensory feedback for normal forward crawling behavior. Required for the normal activity of the proprioceptive sensory dendrites, ddaE which show preferential responses to forward locomotion, and ddaD which show preferential responses to backward locomotion. In Drosophila melanogaster (Fruit fly), this protein is Transmembrane channel-like protein.